Reading from the N-terminus, the 505-residue chain is Sucrose porin (505 aa).

The signal sequence occupies residues 1–22 (MYRKSTLAMLIALLTSAASAHA). The interval 44–87 (ENRAQTAENRAGAAEKKVQQLTAQQQKNQNSTQEVAQRTARLEK) is disordered. Residues 62–72 (QQLTAQQQKNQ) are compositionally biased toward low complexity.

It belongs to the porin LamB (TC 1.B.3) family. In terms of assembly, homotrimer.

The protein resides in the cell outer membrane. Functionally, porin for sucrose uptake. This Salmonella typhimurium protein is Sucrose porin (scrY).